Reading from the N-terminus, the 462-residue chain is Sensor histidine kinase RegB (462 aa).

Over 1 to 25 (MILGPDGILNRDTRGDWWRLRTLIL) the chain is Cytoplasmic. A helical transmembrane segment spans residues 26–45 (LRWMAVAGQLAAIVVTDWYL). Residues 46–51 (GVRLPM) are Extracellular-facing. The chain crosses the membrane as a helical span at residues 52–70 (GLCFMAVGASVIANVIATF). Topologically, residues 71–78 (VFPQNRRL) are cytoplasmic. Residues 79–96 (TEFQALMILLFDLTQLSF) traverse the membrane as a helical segment. Residues 97–103 (LLFLTGG) are Extracellular-facing. A helical membrane pass occupies residues 104–123 (LTNPFALLILAPVTISGVAL). At 124 to 129 (DVRTTV) the chain is on the cytoplasmic side. A helical transmembrane segment spans residues 130-149 (ILGAIAIGLLTFTAYFHLPL). Over 150–164 (ILADGSSLSVPRMFE) the chain is Extracellular. Residues 165-182 (FGFWLAIVIGILFLGLYS) traverse the membrane as a helical segment. Topologically, residues 183-462 (RRVAIEIRSM…PLGENVLIQT (280 aa)) are cytoplasmic. The region spanning 218–445 (AAAHELGTPL…IVEVIWPVDR (228 aa)) is the Histidine kinase domain. Residue His221 is modified to Phosphohistidine; by autocatalysis.

The protein resides in the cell inner membrane. The catalysed reaction is ATP + protein L-histidine = ADP + protein N-phospho-L-histidine.. In terms of biological role, member of the two-component regulatory system RegB/RegA. Involved in the positive regulation of photosynthesis gene expression in response to anaerobiosis. Also involved in positive regulation of the cbbI and cbbII Calvin cycle CO2 fixation operons, as well as in regulation of expression of genes involved in alternative CO2 fixation pathways. Phosphorylates RegA/PrrA. The polypeptide is Sensor histidine kinase RegB (regB) (Cereibacter sphaeroides (Rhodobacter sphaeroides)).